The following is a 358-amino-acid chain: Aromatic amino acid aminotransferase (358 aa).

K214 carries the N6-(pyridoxal phosphate)lysine modification.

Belongs to the class-II pyridoxal-phosphate-dependent aminotransferase family. As to quaternary structure, homodimer. The cofactor is pyridoxal 5'-phosphate.

The enzyme catalyses an aromatic L-alpha-amino acid + 2-oxoglutarate = an aromatic oxo-acid + L-glutamate. Its function is as follows. Aminotransferase that catalyzes the conversion of aromatic amino acids and 2-oxoglutarate into corresponding aromatic oxo acids and L-glutamate. In Rhodococcus erythropolis (strain PR4 / NBRC 100887), this protein is Aromatic amino acid aminotransferase.